A 264-amino-acid chain; its full sequence is Thiazole synthase (264 aa).

The active-site Schiff-base intermediate with DXP is the Lys106. 1-deoxy-D-xylulose 5-phosphate is bound by residues Gly167, 193–194 (AG), and 215–216 (NT).

The protein belongs to the ThiG family. As to quaternary structure, homotetramer. Forms heterodimers with either ThiH or ThiS.

It localises to the cytoplasm. It catalyses the reaction [ThiS sulfur-carrier protein]-C-terminal-Gly-aminoethanethioate + 2-iminoacetate + 1-deoxy-D-xylulose 5-phosphate = [ThiS sulfur-carrier protein]-C-terminal Gly-Gly + 2-[(2R,5Z)-2-carboxy-4-methylthiazol-5(2H)-ylidene]ethyl phosphate + 2 H2O + H(+). It participates in cofactor biosynthesis; thiamine diphosphate biosynthesis. Catalyzes the rearrangement of 1-deoxy-D-xylulose 5-phosphate (DXP) to produce the thiazole phosphate moiety of thiamine. Sulfur is provided by the thiocarboxylate moiety of the carrier protein ThiS. In vitro, sulfur can be provided by H(2)S. The sequence is that of Thiazole synthase from Stenotrophomonas maltophilia (strain R551-3).